Reading from the N-terminus, the 45-residue chain is DNA-directed RNA polymerase subunit Rpo12 (45 aa).

Zn(2+) contacts are provided by C8, C23, and C26.

This sequence belongs to the archaeal Rpo12/eukaryotic RPC10 RNA polymerase subunit family. Part of the RNA polymerase complex. Requires Zn(2+) as cofactor.

It is found in the cytoplasm. The catalysed reaction is RNA(n) + a ribonucleoside 5'-triphosphate = RNA(n+1) + diphosphate. Functionally, DNA-dependent RNA polymerase (RNAP) catalyzes the transcription of DNA into RNA using the four ribonucleoside triphosphates as substrates. The chain is DNA-directed RNA polymerase subunit Rpo12 from Methanocella arvoryzae (strain DSM 22066 / NBRC 105507 / MRE50).